Reading from the N-terminus, the 271-residue chain is MYHLLIIITTLSFSSINITFAVDEAFPSIPTTFSVATKQHYDVKPIHHEVYDGERKIYDISHQYTPELPVWESSEGLGNFLRLAVSMKNGSDANISKMELSVHSGTHVDAPGHFHDHYYESGFDTDSLDLQILNGPALLVDVPRDKNISAEVMKSLHIPRGIRRVLFKTLNTDRRLMFKKEFDSSFVGFMVDGAKWLVENTDIKLVGLDYLSFAAYDEAPATHRFILERRDIIPVEALKLDDVEVGMYTLHCLPLRLVGAEGAPTRCILIK.

An N-terminal signal peptide occupies residues 1–21 (MYHLLIIITTLSFSSINITFA).

Belongs to the Cyclase 1 superfamily.

It localises to the secreted. The protein localises to the extracellular space. The protein resides in the extracellular matrix. This chain is Cyclase-like protein 3, found in Arabidopsis thaliana (Mouse-ear cress).